Reading from the N-terminus, the 282-residue chain is Acetyl-coenzyme A carboxylase carboxyl transferase subunit beta (282 aa).

A CoA carboxyltransferase N-terminal domain is found at Gly-26–His-282.

Belongs to the AccD/PCCB family. In terms of assembly, acetyl-CoA carboxylase is a heterohexamer composed of biotin carboxyl carrier protein (AccB), biotin carboxylase (AccC) and two subunits each of ACCase subunit alpha (AccA) and ACCase subunit beta (AccD).

Its subcellular location is the cytoplasm. The catalysed reaction is N(6)-carboxybiotinyl-L-lysyl-[protein] + acetyl-CoA = N(6)-biotinyl-L-lysyl-[protein] + malonyl-CoA. It participates in lipid metabolism; malonyl-CoA biosynthesis; malonyl-CoA from acetyl-CoA: step 1/1. Its function is as follows. Component of the acetyl coenzyme A carboxylase (ACC) complex. Biotin carboxylase (BC) catalyzes the carboxylation of biotin on its carrier protein (BCCP) and then the CO(2) group is transferred by the transcarboxylase to acetyl-CoA to form malonyl-CoA. The polypeptide is Acetyl-coenzyme A carboxylase carboxyl transferase subunit beta (Flavobacteriaceae bacterium (strain 3519-10)).